The sequence spans 454 residues: Pyrimidine/purine nucleotide 5'-monophosphate nucleosidase (454 aa).

It belongs to the LOG family.

It carries out the reaction a pyrimidine ribonucleoside 5'-phosphate + H2O = a pyrimidine nucleobase + D-ribose 5-phosphate. The catalysed reaction is AMP + H2O = adenine + D-ribose 5-phosphate. The enzyme catalyses GMP + H2O = guanine + D-ribose 5-phosphate. It catalyses the reaction CMP + H2O = cytosine + D-ribose 5-phosphate. It carries out the reaction IMP + H2O = hypoxanthine + D-ribose 5-phosphate. The catalysed reaction is UMP + H2O = D-ribose 5-phosphate + uracil. The enzyme catalyses dTMP + H2O = 2-deoxy-D-ribose 5-phosphate + thymine. Its function is as follows. Catalyzes the hydrolysis of the N-glycosidic bond of diverse pyrimidine and purine nucleotide 5'-monophosphates, to form ribose 5-phosphate and the corresponding free base. Can use AMP, GMP, IMP, CMP, dTMP and UMP as substrates. Cannot catalyze the reverse reactions. May contribute to nucleoside pool homeostasis by degrading excess nucleotides and feeding back the ribose moiety to catabolism. The sequence is that of Pyrimidine/purine nucleotide 5'-monophosphate nucleosidase from Escherichia coli O157:H7.